Here is a 248-residue protein sequence, read N- to C-terminus: N-acylneuraminate-9-phosphatase (248 aa).

Mg(2+) is bound at residue D12. The phosphate site is built by L13, D14, T131, N132, and K164. D14 is a Mg(2+) binding site. D189 contributes to the Mg(2+) binding site.

The protein belongs to the HAD-like hydrolase superfamily. NANP family. Mg(2+) serves as cofactor.

It catalyses the reaction N-acetylneuraminate 9-phosphate + H2O = N-acetylneuraminate + phosphate. The enzyme catalyses N-glycoloylneuraminate 9-phosphate + H2O = N-glycoloylneuraminate + phosphate. The protein operates within amino-sugar metabolism; N-acetylneuraminate biosynthesis. With respect to regulation, inhibited by calcium. Inhibited by vanadate, sodium orthovanadate and phosphonate. Functionally, catalyzes the dephosphorylation of N-acylneuraminate 9-phosphate (Neu5Ac-9-P) to N-acetylneuraminic acid (Neu5Ac or sialic acid). Can also use N-glycoloylneuraminate 9-phosphate as substrate. The chain is N-acylneuraminate-9-phosphatase from Homo sapiens (Human).